A 214-amino-acid chain; its full sequence is Probable DNA (cytosine-5)-methyltransferase (214 aa).

Cysteine 62 is a catalytic residue.

Belongs to the class I-like SAM-binding methyltransferase superfamily. C5-methyltransferase family. As to quaternary structure, probably requires another subunit for function.

The enzyme catalyses a 2'-deoxycytidine in DNA + S-adenosyl-L-methionine = a 5-methyl-2'-deoxycytidine in DNA + S-adenosyl-L-homocysteine + H(+). Functionally, this is probably the methylase that recognizes and modifies 5'-CpG-3'. This is Probable DNA (cytosine-5)-methyltransferase from Dryophytes versicolor (chameleon treefrog).